A 327-amino-acid polypeptide reads, in one-letter code: Clavesin-2 (327 aa).

The region spanning 96–257 (IKQALKDGFP…EFGGMLPPYD (162 aa)) is the CRAL-TRIO domain. The segment at 289–327 (DKELSPKSMKRSQSVVDPTALKRMDKSEEENMQPLLALD) is disordered.

Forms a complex with clathrin heavy chain and gamma-adaptin.

It localises to the golgi apparatus. The protein localises to the trans-Golgi network membrane. The protein resides in the early endosome membrane. It is found in the cytoplasmic vesicle. Its subcellular location is the clathrin-coated vesicle. In terms of biological role, required for normal morphology of late endosomes and/or lysosomes in neurons. Binds phosphatidylinositol 3,5-bisphosphate (PtdIns(3,5)P2). The polypeptide is Clavesin-2 (Clvs2) (Mus musculus (Mouse)).